We begin with the raw amino-acid sequence, 161 residues long: Regulatory protein RecX (161 aa).

Belongs to the RecX family.

It localises to the cytoplasm. Modulates RecA activity. This chain is Regulatory protein RecX, found in Thermotoga petrophila (strain ATCC BAA-488 / DSM 13995 / JCM 10881 / RKU-1).